Reading from the N-terminus, the 176-residue chain is Sigma intracellular receptor 2 (176 aa).

The Cytoplasmic segment spans residues 1-9; that stretch reads MGVPATRRC. A helical transmembrane segment spans residues 10-30; the sequence is VEWLLGIYFLSHIPITLFMDL. The region spanning 10 to 158 is the EXPERA domain; sequence VEWLLGIYFL…PYLLIPFILL (149 aa). Topologically, residues 31 to 68 are lumenal; it reads QAVLPRELYPVEFRNLLKWYAKEFKDPLLQEPPAWFKS. The helical transmembrane segment at 69 to 89 threads the bilayer; the sequence is FLFCELVFQLPFFPIATYAFL. Cholesterol contacts are provided by Val-75 and Gln-77. At 90-99 the chain is on the cytoplasmic side; that stretch reads KGSCKWIRTP. The chain crosses the membrane as a helical span at residues 100–120; it reads AIIYSVHTMTTLIPILSTFLF. Residues 121–140 lie on the Lumenal side of the membrane; it reads EDFSKASGFKGQRPETLHER. Residues 141 to 161 form a helical membrane-spanning segment; that stretch reads LTLISVYAPYLLIPFILLIFM. The Cytoplasmic segment spans residues 162-176; the sequence is LRSPYYKYEEKRKKK. The short motif at 172–176 is the ER retention motif element; it reads KRKKK.

It belongs to the TMEM97/sigma-2 receptor family. As to quaternary structure, homodimer. Interacts with NPC1; the interaction impairs NPC1-mediated cholesterol transport. Interacts with PGRMC1 and LDLR; the interaction increases LDL internalization. Interacts with histatin 1/HTN1; the interaction induces HTN1-stimulating wound healing. Interacts with TSPO.

It is found in the rough endoplasmic reticulum membrane. Its subcellular location is the nucleus membrane. Functionally, sigma-2 receptor which contributes to ameliorate dysfunctional cellular processes and slow degenerative progression by regulating cell functions including cholesterol biosynthesis/trafficking, membrane trafficking, autophagy, lipid membrane-bound protein trafficking, and receptor stabilization at the cell surface. Forms a ternary complex with PGRMC1 receptor and low density lipoprotein receptor/LDLR at the plasma membrane, which increases LDLR-mediated LDL cholesterol internalization. Decreases lysosomal sterol transporter NPC1 availability to the cell, probably through NPC1-binding, hence controlling lipid transport, including cholesterol and LBPA, outside of late endosome/lysosome. Binds regio- and stereoselective ligand 20(S)-hydroxycholesterol (20(S)-OHC) which enhances TMEM97-NPC1 interaction and decreases TMEM97-PGRMC1 and TMEM97-TSPO interactions, thereby linking OHC binding to cholesterol homeostasis. Also able to bind cholesterol. Binds histatin 1 (Hst 1)/HN1 salivary peptide at the ER membrane, which is critical for increasing mitochondria-ER contacts and stimulating Hst1 wound healing properties. May alter the activity of some cytochrome P450 proteins. Although shows homologies with sterol isomerases (EXPERA domain), not able to catalyze sterol isomerization. However, may act as sensors of these molecules. Acts as a quality control factor in the ER, promoting the proteolytic degradation of nonproductive and extramitochondrial precursor proteins in the ER membrane thus removing them from the ER surface. This Macaca fascicularis (Crab-eating macaque) protein is Sigma intracellular receptor 2 (Tmem97).